The following is a 747-amino-acid chain: DNA topoisomerase 4 subunit A (747 aa).

The region spanning leucine 35–methionine 498 is the Topo IIA-type catalytic domain. Tyrosine 124 serves as the catalytic O-(5'-phospho-DNA)-tyrosine intermediate.

The protein belongs to the type II topoisomerase GyrA/ParC subunit family. ParC type 1 subfamily. As to quaternary structure, heterotetramer composed of ParC and ParE.

It is found in the cell membrane. The enzyme catalyses ATP-dependent breakage, passage and rejoining of double-stranded DNA.. In terms of biological role, topoisomerase IV is essential for chromosome segregation. It relaxes supercoiled DNA. Performs the decatenation events required during the replication of a circular DNA molecule. This is DNA topoisomerase 4 subunit A from Haemophilus influenzae (strain ATCC 51907 / DSM 11121 / KW20 / Rd).